The primary structure comprises 189 residues: HTH-type transcriptional repressor AcnR (189 aa).

One can recognise an HTH tetR-type domain in the interval 10-70 (AERKVEILSG…EVAHEDMRKM (61 aa)). The H-T-H motif DNA-binding region spans 33–52 (TVARLEETIGKSRGAIFHHY). Citrate contacts are provided by residues 79-80 (LI), R130, and Q134. Position 181 (E181) interacts with Mg(2+). Residue R185 coordinates citrate.

As to quaternary structure, homodimer.

In terms of biological role, acnR negatively controls the expression of the aconitase gene acn. This chain is HTH-type transcriptional repressor AcnR, found in Corynebacterium jeikeium (strain K411).